A 502-amino-acid polypeptide reads, in one-letter code: Pyruvate kinase (502 aa).

Arg-54 contacts substrate. K(+) is bound by residues Asn-56, Ser-58, Asp-88, and Thr-89. Asn-56–His-59 is an ATP binding site. Residues Arg-95 and Lys-184 each coordinate ATP. Position 252 (Glu-252) interacts with Mg(2+). Substrate-binding residues include Gly-275, Asp-276, and Thr-308. A Mg(2+)-binding site is contributed by Asp-276.

It belongs to the pyruvate kinase family. As to quaternary structure, homotetramer. It depends on Mg(2+) as a cofactor. K(+) is required as a cofactor.

It carries out the reaction pyruvate + ATP = phosphoenolpyruvate + ADP + H(+). The protein operates within carbohydrate degradation; glycolysis; pyruvate from D-glyceraldehyde 3-phosphate: step 5/5. Its activity is regulated as follows. Regulated by phosphoenolpyruvate substrate and is allosterically activated by ribose-5-phosphate, AMP and other nucleoside monophosphates but not by fructose-1,6-bisphosphate. This is Pyruvate kinase (pyk) from Lactococcus lactis subsp. lactis (strain IL1403) (Streptococcus lactis).